The following is a 486-amino-acid chain: Glycogen synthase (486 aa).

An ADP-alpha-D-glucose-binding site is contributed by Lys-15.

This sequence belongs to the glycosyltransferase 1 family. Bacterial/plant glycogen synthase subfamily.

It catalyses the reaction [(1-&gt;4)-alpha-D-glucosyl](n) + ADP-alpha-D-glucose = [(1-&gt;4)-alpha-D-glucosyl](n+1) + ADP + H(+). Its pathway is glycan biosynthesis; glycogen biosynthesis. Its function is as follows. Synthesizes alpha-1,4-glucan chains using ADP-glucose. This is Glycogen synthase from Pseudothermotoga lettingae (strain ATCC BAA-301 / DSM 14385 / NBRC 107922 / TMO) (Thermotoga lettingae).